Reading from the N-terminus, the 223-residue chain is MEVKIEESWKEILKAEFCKGYFKRLVNFIKNEYKTKKGKIFPPPKLIFNAFDSLPFKDIKVVILGQDPYHGKRQANGLAFSVNSDIKIPPSLQNIFKEIERSLKIQTIPNGDLTRWATQGVFLLNSILTVEESRPSSHKDIGWEIFTNEVIKIISKNLNNIVFMLWGNFARGKKELIDASRHLILETSHPSPYSAHNGFLGSNHFSQALRYLKEHNKSPIDFQ.

Residue aspartate 67 is the Proton acceptor of the active site.

The protein belongs to the uracil-DNA glycosylase (UDG) superfamily. UNG family.

Its subcellular location is the cytoplasm. The enzyme catalyses Hydrolyzes single-stranded DNA or mismatched double-stranded DNA and polynucleotides, releasing free uracil.. Its function is as follows. Excises uracil residues from the DNA which can arise as a result of misincorporation of dUMP residues by DNA polymerase or due to deamination of cytosine. The polypeptide is Uracil-DNA glycosylase (Borrelia hermsii (strain HS1 / DAH)).